The following is a 476-amino-acid chain: Bifunctional protein HldE (476 aa).

The ribokinase stretch occupies residues 1 to 319 (MKVSLPAFEK…EALALHHGES (319 aa)). ATP is bound at residue 195-198 (NMSE). Residue Asp264 is part of the active site. The segment at 345-476 (MTNGCFDILH…AIIQNIMANQ (132 aa)) is cytidylyltransferase.

This sequence in the N-terminal section; belongs to the carbohydrate kinase PfkB family. In the C-terminal section; belongs to the cytidylyltransferase family. As to quaternary structure, homodimer.

The catalysed reaction is D-glycero-beta-D-manno-heptose 7-phosphate + ATP = D-glycero-beta-D-manno-heptose 1,7-bisphosphate + ADP + H(+). It carries out the reaction D-glycero-beta-D-manno-heptose 1-phosphate + ATP + H(+) = ADP-D-glycero-beta-D-manno-heptose + diphosphate. It participates in nucleotide-sugar biosynthesis; ADP-L-glycero-beta-D-manno-heptose biosynthesis; ADP-L-glycero-beta-D-manno-heptose from D-glycero-beta-D-manno-heptose 7-phosphate: step 1/4. The protein operates within nucleotide-sugar biosynthesis; ADP-L-glycero-beta-D-manno-heptose biosynthesis; ADP-L-glycero-beta-D-manno-heptose from D-glycero-beta-D-manno-heptose 7-phosphate: step 3/4. Functionally, catalyzes the phosphorylation of D-glycero-D-manno-heptose 7-phosphate at the C-1 position to selectively form D-glycero-beta-D-manno-heptose-1,7-bisphosphate. Catalyzes the ADP transfer from ATP to D-glycero-beta-D-manno-heptose 1-phosphate, yielding ADP-D-glycero-beta-D-manno-heptose. The polypeptide is Bifunctional protein HldE (Shewanella baltica (strain OS155 / ATCC BAA-1091)).